Consider the following 861-residue polypeptide: ATP-dependent helicase rhp16 (861 aa).

Polar residues predominate over residues 1–13 (MGTSCNKINSNSN). Residues 1–217 (MGTSCNKINS…KSIPSHERTH (217 aa)) are disordered. Basic and acidic residues-rich tracts occupy residues 14–23 (KGKENMHFVL) and 38–57 (VERD…KEFE). Over residues 60 to 82 (LSTNKKLIIQSNNTSSQHSTPPL) the composition is skewed to polar residues. Low complexity predominate over residues 83–95 (SISDTSTHTGSST). Residues 96–106 (DNVEANPNTGF) show a composition bias toward polar residues. Over residues 109–123 (ARKRSLRSSNLKKKF) the composition is skewed to basic residues. A compositionally biased stretch (acidic residues) spans 131-145 (ESNESEFIDDDESDE). The segment covering 193–204 (ARASSSASSSSR) has biased composition (low complexity). Positions 268–442 (RQEDSSFGGG…FSLLRFLRAD (175 aa)) constitute a Helicase ATP-binding domain. 281-288 (DEMGMGKT) is a binding site for ATP. The DEAH box motif lies at 393–396 (DEAH). Residues 609–652 (CKICDEVAQDAIESRCHHTFCRLCVTEYINAAGDGENVNCPSCF) form an RING-type zinc finger. A Helicase C-terminal domain is found at 695–848 (LVEELYLLRK…TIDQDEKALN (154 aa)).

It belongs to the SNF2/RAD54 helicase family.

The protein resides in the nucleus. In terms of biological role, involved in global genome repair (GGR) via nucleotide excision repair (NER), in conjunction with rhp7, after UV irradiation. The protein is ATP-dependent helicase rhp16 (rhp16) of Schizosaccharomyces pombe (strain 972 / ATCC 24843) (Fission yeast).